The chain runs to 208 residues: Imidazoleglycerol-phosphate dehydratase (208 aa).

Belongs to the imidazoleglycerol-phosphate dehydratase family.

It localises to the cytoplasm. The catalysed reaction is D-erythro-1-(imidazol-4-yl)glycerol 3-phosphate = 3-(imidazol-4-yl)-2-oxopropyl phosphate + H2O. The protein operates within amino-acid biosynthesis; L-histidine biosynthesis; L-histidine from 5-phospho-alpha-D-ribose 1-diphosphate: step 6/9. This Prochlorococcus marinus (strain MIT 9211) protein is Imidazoleglycerol-phosphate dehydratase.